A 532-amino-acid chain; its full sequence is Phosphoenolpyruvate carboxykinase (ATP) (532 aa).

Substrate contacts are provided by Arg-60, Tyr-194, and Lys-200. Residues Lys-200, His-219, and 237–245 each bind ATP; that span reads GLSGTGKTT. Positions 200 and 219 each coordinate Mn(2+). Asp-258 contributes to the Mn(2+) binding site. The ATP site is built by Glu-286, Arg-324, and Thr-449. Arg-324 contacts substrate.

This sequence belongs to the phosphoenolpyruvate carboxykinase (ATP) family. It depends on Mn(2+) as a cofactor.

The protein resides in the cytoplasm. It carries out the reaction oxaloacetate + ATP = phosphoenolpyruvate + ADP + CO2. It participates in carbohydrate biosynthesis; gluconeogenesis. In terms of biological role, involved in the gluconeogenesis. Catalyzes the conversion of oxaloacetate (OAA) to phosphoenolpyruvate (PEP) through direct phosphoryl transfer between the nucleoside triphosphate and OAA. The chain is Phosphoenolpyruvate carboxykinase (ATP) from Cereibacter sphaeroides (strain ATCC 17025 / ATH 2.4.3) (Rhodobacter sphaeroides).